The following is a 96-amino-acid chain: Large ribosomal subunit protein bL25 (96 aa).

It belongs to the bacterial ribosomal protein bL25 family. As to quaternary structure, part of the 50S ribosomal subunit; part of the 5S rRNA/L5/L18/L25 subcomplex. Contacts the 5S rRNA. Binds to the 5S rRNA independently of L5 and L18.

Functionally, this is one of the proteins that binds to the 5S RNA in the ribosome where it forms part of the central protuberance. The chain is Large ribosomal subunit protein bL25 from Buchnera aphidicola subsp. Schizaphis graminum (strain Sg).